A 219-amino-acid chain; its full sequence is Protein DMP5 (219 aa).

The segment at 1 to 24 (MSALRLRNANTPAPELDELSDQTP) is disordered. The next 4 membrane-spanning stretches (helical) occupy residues 51-71 (LSNLLPTGTLLAFQLLTPVFT), 82-102 (FLTAVLLFLLAASCFVSSFTD), 142-162 (MRFVDWIHATLSVLVFGAVAL), and 182-202 (VLDIVPVGVGVMCSLLFMVFP).

The protein belongs to the plant DMP1 protein family.

The protein localises to the endoplasmic reticulum membrane. In terms of biological role, involved in membrane remodeling. In Arabidopsis thaliana (Mouse-ear cress), this protein is Protein DMP5.